The primary structure comprises 366 residues: PTI1-like tyrosine-protein kinase 2 (366 aa).

Residues 8–23 are compositionally biased toward basic and acidic residues; the sequence is GDKKGDSDLSNEEVHL. The disordered stretch occupies residues 8-50; it reads GDKKGDSDLSNEEVHLKSPWQNSEANQKNQKPQAVVKPEAQKE. Residues 26-39 are compositionally biased toward polar residues; that stretch reads PWQNSEANQKNQKP. A Protein kinase domain is found at 71 to 353; that stretch reads FGSKSLIGEG…IVVKALQPLL (283 aa). ATP-binding positions include 77-85 and lysine 99; that span reads IGEGSYGRV. The active-site Proton acceptor is aspartate 203.

It belongs to the protein kinase superfamily. Tyr protein kinase family. As to quaternary structure, interacts with OXI1. Post-translationally, autophosphorylated and phosphorylated by OXI1.

The catalysed reaction is L-tyrosyl-[protein] + ATP = O-phospho-L-tyrosyl-[protein] + ADP + H(+). Its activity is regulated as follows. Strongly activated in response to phosphatidic acid (PA) and xylanase in a OXI1- and PDK1-dependent manner, and, to a lesser extent, by hydrogen peroxide and flagellin in a OXI1-dependent manner. Functionally, probable tyrosine-protein kinase involved in oxidative burst-mediated signaling leading to specific genes expression. The sequence is that of PTI1-like tyrosine-protein kinase 2 (PTI12) from Arabidopsis thaliana (Mouse-ear cress).